The chain runs to 311 residues: Peptide methionine sulfoxide reductase MsrA/MsrB (311 aa).

The peptide methionine sulfoxide reductase A stretch occupies residues 1–155; it reads MAEIYLAGGC…PGGYCHINVN (155 aa). The active site involves C10. The MsrB domain maps to 172–295; that stretch reads DAELKEQLTQ…NSAALRFIPK (124 aa). C284 functions as the Nucleophile in the catalytic mechanism.

In the N-terminal section; belongs to the MsrA Met sulfoxide reductase family. This sequence in the C-terminal section; belongs to the MsrB Met sulfoxide reductase family.

The catalysed reaction is L-methionyl-[protein] + [thioredoxin]-disulfide + H2O = L-methionyl-(S)-S-oxide-[protein] + [thioredoxin]-dithiol. It catalyses the reaction [thioredoxin]-disulfide + L-methionine + H2O = L-methionine (S)-S-oxide + [thioredoxin]-dithiol. It carries out the reaction L-methionyl-[protein] + [thioredoxin]-disulfide + H2O = L-methionyl-(R)-S-oxide-[protein] + [thioredoxin]-dithiol. Functionally, has an important function as a repair enzyme for proteins that have been inactivated by oxidation. Catalyzes the reversible oxidation-reduction of methionine sulfoxide in proteins to methionine. Involved in protection against oxidative stress when the bacterium enters the host bloodstream and required for maximal growth under aerobic and anaerobic conditions. This Streptococcus gordonii (strain Challis / ATCC 35105 / BCRC 15272 / CH1 / DL1 / V288) protein is Peptide methionine sulfoxide reductase MsrA/MsrB (msrAB).